Reading from the N-terminus, the 153-residue chain is Regulatory protein RecX (153 aa).

It belongs to the RecX family.

It localises to the cytoplasm. Functionally, modulates RecA activity. The chain is Regulatory protein RecX from Neisseria meningitidis serogroup C / serotype 2a (strain ATCC 700532 / DSM 15464 / FAM18).